A 560-amino-acid polypeptide reads, in one-letter code: DNA-directed primase/polymerase protein (560 aa).

Residues 1 to 22 (MNRKWEAKLKQIEERASHYERK) are a coiled coil. Substrate is bound by residues Arg76, 114 to 116 (DLE), and 165 to 169 (KFSRH). 2 residues coordinate Mn(2+): Asp114 and Glu116. The interval 203-223 (EDDDSAPETTGHGFPHFSEAP) is disordered. A Phosphoserine modification is found at Ser255. Substrate contacts are provided by residues 288–291 (RNFR) and Lys297. Residues Cys419, His426, Cys446, and Cys451 each coordinate Zn(2+). The Zinc knuckle motif signature appears at 419-452 (CENIGRAHKSNNIMILVDLKNEVWYQKCHDPVCK). The interval 480-507 (TTDEADETRSNETQNPHKPSPSRLSTGA) is disordered. The tract at residues 481 to 560 (TDEADETRSN…DELIIEVLQE (80 aa)) is interaction with RPA1. Positions 490 to 507 (NETQNPHKPSPSRLSTGA) are enriched in polar residues. Short sequence motifs (RPA1-binding motif) lie at residues 513 to 527 (WDNGIDDAYFLEATE) and 548 to 556 (EIPDELIIE).

It belongs to the eukaryotic-type primase small subunit family. As to quaternary structure, interacts with RPA1; leading to recruitment to chromatin and stimulate DNA primase activity. Interacts with SSBP1. Interacts with POLDIP2; leading to enhance DNA polymerase activity. It depends on Mn(2+) as a cofactor.

It localises to the nucleus. Its subcellular location is the mitochondrion matrix. The protein resides in the chromosome. The catalysed reaction is ssDNA + n NTP = ssDNA/pppN(pN)n-1 hybrid + (n-1) diphosphate.. The enzyme catalyses DNA(n) + a 2'-deoxyribonucleoside 5'-triphosphate = DNA(n+1) + diphosphate. DNA primase and DNA polymerase required to tolerate replication-stalling lesions by bypassing them. Required to facilitate mitochondrial and nuclear replication fork progression by initiating de novo DNA synthesis using dNTPs and acting as an error-prone DNA polymerase able to bypass certain DNA lesions. Shows a high capacity to tolerate DNA damage lesions such as 8oxoG and abasic sites in DNA. Provides different translesion synthesis alternatives when DNA replication is stalled: able to synthesize DNA primers downstream of lesions, such as ultraviolet (UV) lesions, R-loops and G-quadruplexes, to allow DNA replication to continue. Can also realign primers ahead of 'unreadable lesions' such as abasic sites and 6-4 photoproduct (6-4 pyrimidine-pyrimidinone), thereby skipping the lesion. Repriming avoids fork degradation while leading to accumulation of internal ssDNA gaps behind the forks. Also able to incorporate nucleotides opposite DNA lesions such as 8oxoG, like a regular translesion synthesis DNA polymerase. Also required for reinitiating stalled forks after UV damage during nuclear DNA replication. Required for mitochondrial DNA (mtDNA) synthesis and replication, by reinitiating synthesis after UV damage or in the presence of chain-terminating nucleotides. Prevents APOBEC family-mediated DNA mutagenesis by repriming downstream of abasic site to prohibit error-prone translesion synthesis. Has non-overlapping function with POLH. In addition to its role in DNA damage response, also required to maintain efficient nuclear and mitochondrial DNA replication in unperturbed cells. This is DNA-directed primase/polymerase protein from Homo sapiens (Human).